Consider the following 691-residue polypeptide: L-type lectin-domain containing receptor kinase S.6 (691 aa).

The N-terminal stretch at 1 to 25 (MNHHHYSLVIFHLILFLSLDFPTLS) is a signal peptide. At 26–311 (HRFSPPLQNL…VVGLKIPVWS (286 aa)) the chain is on the extracellular side. Residues 27 to 257 (RFSPPLQNLT…LHIVERWKFR (231 aa)) are legume-lectin like. N-linked (GlcNAc...) asparagine glycans are attached at residues Asn-34 and Asn-89. Residues 312–332 (LLPGLAAIVILVAFIVFSLIC) traverse the membrane as a helical segment. Topologically, residues 333–691 (GKKRISEEAD…PWMTPKSHFS (359 aa)) are cytoplasmic. The region spanning 366–653 (FNENAIVGQG…IRGEAPLPVL (288 aa)) is the Protein kinase domain. ATP is bound by residues 372 to 380 (VGQGASATV) and Lys-394. Catalysis depends on Asp-500, which acts as the Proton acceptor.

In the C-terminal section; belongs to the protein kinase superfamily. Ser/Thr protein kinase family. It in the N-terminal section; belongs to the leguminous lectin family.

The protein resides in the cell membrane. The enzyme catalyses L-seryl-[protein] + ATP = O-phospho-L-seryl-[protein] + ADP + H(+). The catalysed reaction is L-threonyl-[protein] + ATP = O-phospho-L-threonyl-[protein] + ADP + H(+). Involved in resistance response to the pathogenic oomycetes Phytophthora infestans and Phytophthora capsici and to the pathogenic bacteria Pseudomonas syringae. In Arabidopsis thaliana (Mouse-ear cress), this protein is L-type lectin-domain containing receptor kinase S.6.